The sequence spans 232 residues: RNA chaperone ProQ (232 aa).

The interval 105–182 is disordered; it reads EAKARVQAQR…REEQHTPVSD (78 aa). The span at 117–136 shows a compositional bias: basic and acidic residues; sequence QQAKKREAAAAAGEKEDAPR. A compositionally biased stretch (basic residues) spans 137–146; it reads RERKPRPTTP. Residues 147–177 are compositionally biased toward basic and acidic residues; the sequence is RRKEGAERKPRAQKSVEKAPKTVKAPREEQH.

Belongs to the ProQ family.

It is found in the cytoplasm. In terms of biological role, RNA chaperone with significant RNA binding, RNA strand exchange and RNA duplexing activities. May regulate ProP activity through an RNA-based, post-transcriptional mechanism. The sequence is that of RNA chaperone ProQ from Escherichia coli O7:K1 (strain IAI39 / ExPEC).